A 265-amino-acid chain; its full sequence is Polyphosphate glucokinase (265 aa).

Over residues 1 to 18 (MTSTGPETSETPGATTQR) the composition is skewed to polar residues. The interval 1 to 22 (MTSTGPETSETPGATTQRHGFG) is disordered. 24 to 29 (DVGGSG) lines the ATP pocket.

It belongs to the ROK (NagC/XylR) family. As to quaternary structure, homodimer.

The catalysed reaction is [phosphate](n) + D-glucose = [phosphate](n-1) + D-glucose 6-phosphate + H(+). It carries out the reaction D-glucose + ATP = D-glucose 6-phosphate + ADP + H(+). Catalyzes the phosphorylation of glucose using polyphosphate or ATP as the phosphoryl donor. Polyphosphate, rather than ATP, seems to be the major phosphate donor for the enzyme in M.tuberculosis. In Mycobacterium tuberculosis (strain CDC 1551 / Oshkosh), this protein is Polyphosphate glucokinase (ppgK).